Consider the following 586-residue polypeptide: MFS-type transporter ucsD (586 aa).

A disordered region spans residues 1 to 56; sequence MSRNSGTTLEDGPLHADPTTEAPNNATVTTNVTANDENTEKEVDADAAAAAPAEAP. Low complexity-rich tracts occupy residues 19–36 and 46–56; these read TTEA…TAND and DAAAAAPAEAP. Residues asparagine 25 and asparagine 31 are each glycosylated (N-linked (GlcNAc...) asparagine). Transmembrane regions (helical) follow at residues 65 to 85, 101 to 121, 131 to 151, 164 to 184, 192 to 212, 220 to 240, 263 to 283, and 290 to 310; these read WAIV…GTII, SFIW…PLMA, WLTL…GGAN, GFGG…LVPL, GIVQ…GGLL, WVFY…FFFL, AIFI…GAVY, and VIVP…YEWT. Asparagine 324 is a glycosylation site (N-linked (GlcNAc...) asparagine). 6 helical membrane passes run 330-350, 368-388, 393-413, 420-440, 458-478, and 532-552; these read VLGV…FMPI, LPLF…LAKF, PMHL…SLLD, AWAC…AILL, VWTF…SAIF, and LRTV…LIWL.

Belongs to the major facilitator superfamily.

Its subcellular location is the membrane. MFS-type transporter; part of the gene cluster that mediates the biosynthesis of UCS1025A, a member of the pyrrolizidinone family that acts as a strong telomerase inhibitor and displays potent antibacterial and antitumor properties. These compounds share a hemiaminal-containing pyrrolizidinone core fused with a gamma-lactone, giving a furopyrrolizidine that is connected to a decalin fragment. The chain is MFS-type transporter ucsD from Acremonium sp.